Here is a 154-residue protein sequence, read N- to C-terminus: Host transcription reprogramming factor 5 (154 aa).

Positions 1–19 (MQILRIAQLMALLATCASA) are cleaved as a signal peptide. A disordered region spans residues 24-85 (TGSRVYSRDV…KRIKAEQNAR (62 aa)). The span at 35 to 50 (QTQGGFSGSPTTNSPD) shows a compositional bias: polar residues. Residues 69 to 85 (ETEKERKKRIKAEQNAR) show a composition bias toward basic and acidic residues. The C2H2-type; degenerate zinc finger occupies 96 to 121 (YQCPYCSDPTVFSHSDALGRHIYTIH).

Its subcellular location is the secreted. The protein localises to the host nucleus. Its function is as follows. Probable secreted effector that translocates into the nuclei of host cells to reprogram the expression of targeted genes by binding on effector binding elements in rice. This chain is Host transcription reprogramming factor 5, found in Pyricularia oryzae (strain 70-15 / ATCC MYA-4617 / FGSC 8958) (Rice blast fungus).